The sequence spans 293 residues: Undecaprenyl-diphosphatase (293 aa).

6 helical membrane passes run 74-94 (VLVF…AGVF), 107-127 (WMII…KDLI), 134-154 (MWIT…AEKM), 209-229 (FLLA…DAFA), 243-263 (VGTL…MKFV), and 271-291 (FAAY…LGML).

This sequence belongs to the UppP family.

It is found in the cell membrane. The enzyme catalyses di-trans,octa-cis-undecaprenyl diphosphate + H2O = di-trans,octa-cis-undecaprenyl phosphate + phosphate + H(+). Its function is as follows. Catalyzes the dephosphorylation of undecaprenyl diphosphate (UPP). Confers resistance to bacitracin. The chain is Undecaprenyl-diphosphatase from Corynebacterium glutamicum (strain R).